A 167-amino-acid chain; its full sequence is HVA22-like protein b (167 aa).

3 consecutive transmembrane segments (helical) span residues 18-38, 47-67, and 68-88; these read VIAG…RAIE, QWLT…TFFR, and LLEW…WLVL.

It belongs to the DP1 family. Predominantly expressed in flower buds.

The protein localises to the membrane. The polypeptide is HVA22-like protein b (HVA22B) (Arabidopsis thaliana (Mouse-ear cress)).